The sequence spans 932 residues: Phosphoenolpyruvate carboxylase (932 aa).

Active-site residues include H164 and K594.

It belongs to the PEPCase type 1 family. Mg(2+) is required as a cofactor.

The catalysed reaction is oxaloacetate + phosphate = phosphoenolpyruvate + hydrogencarbonate. Functionally, forms oxaloacetate, a four-carbon dicarboxylic acid source for the tricarboxylic acid cycle. This chain is Phosphoenolpyruvate carboxylase, found in Bradyrhizobium diazoefficiens (strain JCM 10833 / BCRC 13528 / IAM 13628 / NBRC 14792 / USDA 110).